Here is a 230-residue protein sequence, read N- to C-terminus: Small ribosomal subunit protein uS3 (230 aa).

One can recognise a KH type-2 domain in the interval 39–107 (VRKFLEKKLE…PAQINIAEIR (69 aa)).

This sequence belongs to the universal ribosomal protein uS3 family. Part of the 30S ribosomal subunit. Forms a tight complex with proteins S10 and S14.

Functionally, binds the lower part of the 30S subunit head. Binds mRNA in the 70S ribosome, positioning it for translation. The polypeptide is Small ribosomal subunit protein uS3 (Shewanella amazonensis (strain ATCC BAA-1098 / SB2B)).